Here is a 213-residue protein sequence, read N- to C-terminus: ATP synthase peripheral stalk subunit OSCP, mitochondrial (213 aa).

Residues 1-23 (MAAPAVSGLSRQVRYFSTSVVRP) constitute a mitochondrion transit peptide. An SIFI-degron motif is present at residues 5-23 (AVSGLSRQVRYFSTSVVRP). N6-acetyllysine occurs at positions 54, 60, 70, and 73. Lys90 carries the N6-succinyllysine modification. Residues Lys158 and Lys162 each carry the N6-acetyllysine; alternate modification. 2 positions are modified to N6-succinyllysine; alternate: Lys158 and Lys162. Residues Lys172, Lys176, and Lys192 each carry the N6-acetyllysine modification. Lys199 is modified (N6-succinyllysine).

The protein belongs to the ATPase delta chain family. As to quaternary structure, component of the ATP synthase complex composed at least of ATP5F1A/subunit alpha, ATP5F1B/subunit beta, ATP5MC1/subunit c (homooctomer), MT-ATP6/subunit a, MT-ATP8/subunit 8, ATP5ME/subunit e, ATP5MF/subunit f, ATP5MG/subunit g, ATP5MK/subunit k, ATP5MJ/subunit j, ATP5F1C/subunit gamma, ATP5F1D/subunit delta, ATP5F1E/subunit epsilon, ATP5PF/subunit F6, ATP5PB/subunit b, ATP5PD/subunit d, ATP5PO/subunit OSCP. ATP synthase complex consists of a soluble F(1) head domain (subunits alpha(3) and beta(3)) - the catalytic core - and a membrane F(0) domain - the membrane proton channel (subunits c, a, 8, e, f, g, k and j). These two domains are linked by a central stalk (subunits gamma, delta, and epsilon) rotating inside the F1 region and a stationary peripheral stalk (subunits F6, b, d, and OSCP). In terms of processing, acetylation at Lys-162 decreases ATP production. Deacetylated by SIRT3. In response to mitochondrial stress, the precursor protein is ubiquitinated by the SIFI complex in the cytoplasm before mitochondrial import, leading to its degradation. Within the SIFI complex, UBR4 initiates ubiquitin chain that are further elongated or branched by KCMF1.

It localises to the mitochondrion. The protein resides in the mitochondrion inner membrane. Its function is as follows. Subunit OSCP, of the mitochondrial membrane ATP synthase complex (F(1)F(0) ATP synthase or Complex V) that produces ATP from ADP in the presence of a proton gradient across the membrane which is generated by electron transport complexes of the respiratory chain. ATP synthase complex consist of a soluble F(1) head domain - the catalytic core - and a membrane F(1) domain - the membrane proton channel. These two domains are linked by a central stalk rotating inside the F(1) region and a stationary peripheral stalk. During catalysis, ATP synthesis in the catalytic domain of F(1) is coupled via a rotary mechanism of the central stalk subunits to proton translocation. In vivo, can only synthesize ATP although its ATP hydrolase activity can be activated artificially in vitro. Part of the complex F(0) domain. Part of the complex F(0) domain and the peripheric stalk, which acts as a stator to hold the catalytic alpha(3)beta(3) subcomplex and subunit a/ATP6 static relative to the rotary elements. The sequence is that of ATP synthase peripheral stalk subunit OSCP, mitochondrial from Plecturocebus moloch (Dusky titi monkey).